The primary structure comprises 472 residues: Adenosylhomocysteinase (472 aa).

Substrate is bound by residues T64, D138, and E198. 199–201 provides a ligand contact to NAD(+); that stretch reads TTT. Residues K228 and D232 each coordinate substrate. NAD(+) contacts are provided by residues N233, 262–267, E285, N320, 341–343, and N386; these read GFGDVG and IGH.

Belongs to the adenosylhomocysteinase family. NAD(+) serves as cofactor.

The protein localises to the cytoplasm. The enzyme catalyses S-adenosyl-L-homocysteine + H2O = L-homocysteine + adenosine. Its pathway is amino-acid biosynthesis; L-homocysteine biosynthesis; L-homocysteine from S-adenosyl-L-homocysteine: step 1/1. May play a key role in the regulation of the intracellular concentration of adenosylhomocysteine. This chain is Adenosylhomocysteinase, found in Prochlorococcus marinus (strain MIT 9312).